The sequence spans 202 residues: Holliday junction branch migration complex subunit RuvA (202 aa).

Residues 1–64 form a domain I region; sequence MIDYVSGTLV…EDDESLYGFA (64 aa). The interval 65–143 is domain II; the sequence is TKAERTVFET…DLDVLEDTSP (79 aa). Positions 144-149 are flexible linker; the sequence is LSGGSD. Residues 150-202 form a domain III region; that stretch reads ARAEARADALEALTELGLSKADAERSIRQVLRDNAGIQSADELVRRALKADQE.

It belongs to the RuvA family. In terms of assembly, homotetramer. Forms an RuvA(8)-RuvB(12)-Holliday junction (HJ) complex. HJ DNA is sandwiched between 2 RuvA tetramers; dsDNA enters through RuvA and exits via RuvB. An RuvB hexamer assembles on each DNA strand where it exits the tetramer. Each RuvB hexamer is contacted by two RuvA subunits (via domain III) on 2 adjacent RuvB subunits; this complex drives branch migration. In the full resolvosome a probable DNA-RuvA(4)-RuvB(12)-RuvC(2) complex forms which resolves the HJ.

The protein resides in the cytoplasm. In terms of biological role, the RuvA-RuvB-RuvC complex processes Holliday junction (HJ) DNA during genetic recombination and DNA repair, while the RuvA-RuvB complex plays an important role in the rescue of blocked DNA replication forks via replication fork reversal (RFR). RuvA specifically binds to HJ cruciform DNA, conferring on it an open structure. The RuvB hexamer acts as an ATP-dependent pump, pulling dsDNA into and through the RuvAB complex. HJ branch migration allows RuvC to scan DNA until it finds its consensus sequence, where it cleaves and resolves the cruciform DNA. This chain is Holliday junction branch migration complex subunit RuvA, found in Salinibacter ruber (strain DSM 13855 / M31).